We begin with the raw amino-acid sequence, 108 residues long: Nascent polypeptide-associated complex protein (108 aa).

The region spanning 1-68 (MNPREIRRMM…LREVKKEVEQ (68 aa)) is the NAC-A/B domain.

This sequence belongs to the NAC-alpha family. As to quaternary structure, homodimer. Interacts with the ribosome. Binds ribosomal RNA.

In terms of biological role, contacts the emerging nascent chain on the ribosome. This Picrophilus torridus (strain ATCC 700027 / DSM 9790 / JCM 10055 / NBRC 100828 / KAW 2/3) protein is Nascent polypeptide-associated complex protein.